Reading from the N-terminus, the 669-residue chain is Myb-like protein M (669 aa).

Positions 27–69 (DPSLMDDEFSDNEYDLSPKDDVPSPSKRGRGQIQNGIRRSPNK) are disordered. Acidic residues predominate over residues 30-40 (LMDDEFSDNEY). 2 HTH myb-type domains span residues 60-118 (QNGI…SPDI) and 119-170 (RKGP…SREV). 2 DNA-binding regions (H-T-H motif) span residues 90–114 (WKRI…KRVL) and 142–166 (WKKI…KSLQ). Positions 172 to 223 (WVPKEDEVLVKKVDEMGENLSWLEVSEYLAKLKHTNTLRTALECKTRYLQLT) constitute a Myb-like domain. Disordered stretches follow at residues 226–530 (GGSI…EDNG) and 550–636 (IKNK…PHQS). Composition is skewed to low complexity over residues 234-382 (NQSN…SSPS), 389-415 (NNNN…NSNN), and 450-464 (PTSL…SSPS). Residues 465–482 (CNNSIRQPSPSPSIKTFK) are compositionally biased toward polar residues. Composition is skewed to low complexity over residues 483-521 (STIV…NNDN), 555-593 (NNNN…NSDN), and 611-636 (SNFK…PHQS).

The protein resides in the nucleus. This is Myb-like protein M (mybM) from Dictyostelium discoideum (Social amoeba).